A 166-amino-acid chain; its full sequence is Crossover junction endodeoxyribonuclease RuvC (166 aa).

Active-site residues include aspartate 12, glutamate 71, and aspartate 143. Positions 12, 71, and 143 each coordinate Mg(2+).

The protein belongs to the RuvC family. In terms of assembly, homodimer which binds Holliday junction (HJ) DNA. The HJ becomes 2-fold symmetrical on binding to RuvC with unstacked arms; it has a different conformation from HJ DNA in complex with RuvA. In the full resolvosome a probable DNA-RuvA(4)-RuvB(12)-RuvC(2) complex forms which resolves the HJ. Mg(2+) is required as a cofactor.

The protein resides in the cytoplasm. The enzyme catalyses Endonucleolytic cleavage at a junction such as a reciprocal single-stranded crossover between two homologous DNA duplexes (Holliday junction).. In terms of biological role, the RuvA-RuvB-RuvC complex processes Holliday junction (HJ) DNA during genetic recombination and DNA repair. Endonuclease that resolves HJ intermediates. Cleaves cruciform DNA by making single-stranded nicks across the HJ at symmetrical positions within the homologous arms, yielding a 5'-phosphate and a 3'-hydroxyl group; requires a central core of homology in the junction. The consensus cleavage sequence is 5'-(A/T)TT(C/G)-3'. Cleavage occurs on the 3'-side of the TT dinucleotide at the point of strand exchange. HJ branch migration catalyzed by RuvA-RuvB allows RuvC to scan DNA until it finds its consensus sequence, where it cleaves and resolves the cruciform DNA. This Oleidesulfovibrio alaskensis (strain ATCC BAA-1058 / DSM 17464 / G20) (Desulfovibrio alaskensis) protein is Crossover junction endodeoxyribonuclease RuvC.